Reading from the N-terminus, the 68-residue chain is Defensin gallicin (68 aa).

An N-terminal signal peptide occupies residues 1–16 (MWIESDAGVAIDRHAR).

In terms of processing, contains 5 disulfide bonds. As to expression, expressed in hemolymph, gills, digestive gland, foot, adductor muscles and mantle.

It is found in the secreted. Its subcellular location is the target cell membrane. In terms of biological role, shows antibacterial activity against numerous Gram-positive bacteria. It selectively inhibits peptidoglycan biosynthesis through complex formation with the cell wall precursor lipid II (1:1 molar ratio) thus inhibiting cell wall synthesis. This chain is Defensin gallicin, found in Mytilus galloprovincialis (Mediterranean mussel).